A 446-amino-acid polypeptide reads, in one-letter code: Phosphoglucosamine mutase (446 aa).

Serine 101 functions as the Phosphoserine intermediate in the catalytic mechanism. Mg(2+) contacts are provided by serine 101, aspartate 240, aspartate 242, and aspartate 244. Residue serine 101 is modified to Phosphoserine.

This sequence belongs to the phosphohexose mutase family. The cofactor is Mg(2+). Post-translationally, activated by phosphorylation.

The catalysed reaction is alpha-D-glucosamine 1-phosphate = D-glucosamine 6-phosphate. Catalyzes the conversion of glucosamine-6-phosphate to glucosamine-1-phosphate. This is Phosphoglucosamine mutase from Pseudomonas putida (strain ATCC 47054 / DSM 6125 / CFBP 8728 / NCIMB 11950 / KT2440).